A 122-amino-acid chain; its full sequence is Small ribosomal subunit protein uS13 (122 aa).

A disordered region spans residues 92-122; sequence HRNGLPVRGQRTHTNARTRKGKAKPIAGKKK. Positions 101 to 122 are enriched in basic residues; that stretch reads QRTHTNARTRKGKAKPIAGKKK.

The protein belongs to the universal ribosomal protein uS13 family. In terms of assembly, part of the 30S ribosomal subunit. Forms a loose heterodimer with protein S19. Forms two bridges to the 50S subunit in the 70S ribosome.

Functionally, located at the top of the head of the 30S subunit, it contacts several helices of the 16S rRNA. In the 70S ribosome it contacts the 23S rRNA (bridge B1a) and protein L5 of the 50S subunit (bridge B1b), connecting the 2 subunits; these bridges are implicated in subunit movement. Contacts the tRNAs in the A and P-sites. This Erythrobacter litoralis (strain HTCC2594) protein is Small ribosomal subunit protein uS13.